Here is a 379-residue protein sequence, read N- to C-terminus: Transcription termination factor 1a, mitochondrial (379 aa).

Residues 1-37 constitute a mitochondrion transit peptide; it reads MASRNIWCVRRNFLFDLRDWMLQYSAEVFLKSISFRP. 5 interaction with DNA regions span residues 151 to 152, 229 to 233, 306 to 313, 337 to 340, and 366 to 373; these read RS, QSTKR, SEKKFNDK, SINT, and SQRRYEAK.

It belongs to the mTERF family. Monomer. In terms of processing, phosphoprotein with mostly four phosphate groups. While the DNA-binding activity is unaffected by the phosphorylation state, only the phosphorylated form of the protein is active for termination activity. Functioning seems to be regulated by phosphorylation. In terms of tissue distribution, predominantly expressed in heart and liver, with extremely low levels in other tissues. Expressed strongly in the heart and at lower levels in brain, liver and kidney.

The protein localises to the mitochondrion. In terms of biological role, transcription termination factor. Binds to a 28 bp region within the tRNA(Leu(uur)) gene at a position immediately adjacent to and downstream of the 16S rRNA gene; this region comprises a tridecamer sequence critical for directing accurate termination. Binds DNA along the major grove and promotes DNA bending and partial unwinding. Promotes base flipping. Transcription termination activity appears to be polarized with highest specificity for transcripts initiated on the light strand. The chain is Transcription termination factor 1a, mitochondrial (Mterf1a) from Mus musculus (Mouse).